Consider the following 252-residue polypeptide: Deoxyuridine 5'-triphosphate nucleotidohydrolase, mitochondrial (252 aa).

The transit peptide at Met-1–Gly-69 directs the protein to the mitochondrion. Phosphoserine is present on residues Cys-11, Ser-88, and Ser-99. Positions Trp-78 to Ala-104 are disordered. DUTP contacts are provided by residues Arg-173 to Gly-175, Gly-187 to Tyr-193, Gly-198, Arg-241, and Phe-246 to Gly-247.

This sequence belongs to the dUTPase family. In terms of assembly, homotrimer. Mg(2+) is required as a cofactor. Nuclear isoform 2 is phosphorylated in vivo on Ser-11, a reaction that can be catalyzed in vitro by CDC2. Phosphorylation in mature T-cells occurs in a cell cycle-dependent manner. Isoform 3 is not phosphorylated. Found in a variety of tissues. Isoform 3 expression is constitutive, while isoform 2 expression correlates with the onset of DNA replication (at protein level). Isoform 2 degradation coincides with the cessation of nuclear DNA replication (at protein level).

Its subcellular location is the nucleus. The protein localises to the mitochondrion. It carries out the reaction dUTP + H2O = dUMP + diphosphate + H(+). It participates in pyrimidine metabolism; dUMP biosynthesis; dUMP from dCTP (dUTP route): step 2/2. Phosphorylation is necessary for activity. Catalyzes the cleavage of 2'-deoxyuridine 5'-triphosphate (dUTP) into 2'-deoxyuridine 5'-monophosphate (dUMP) and inorganic pyrophosphate and through its action efficiently prevents uracil misincorporation into DNA and at the same time provides dUMP, the substrate for de novo thymidylate biosynthesis. Inhibits peroxisome proliferator-activated receptor (PPAR) activity by binding of its N-terminal to PPAR, preventing the latter's dimerization with retinoid X receptor. Essential for embryonic development. This Homo sapiens (Human) protein is Deoxyuridine 5'-triphosphate nucleotidohydrolase, mitochondrial (DUT).